A 654-amino-acid chain; its full sequence is Protein fem-1 homolog A (654 aa).

ANK repeat units lie at residues 2–31, 40–70, 82–111, 115–145, 149–178, 182–211, and 214–243; these read DLHT…REEI, GGGT…SVEA, EGAP…SVNR, TNST…DLEV, HGHT…QVNR, KGNT…RMER, and YGMT…GHGQ. Residue Ser108 is modified to Phosphoserine. The disordered stretch occupies residues 241–265; sequence HGQLSGTELPGEGSSQMAGNHCSTP. Over residues 253-263 the composition is skewed to polar residues; the sequence is GSSQMAGNHCS. TPR repeat units lie at residues 283-317 and 375-408; these read VEAL…RHQG and SYYI…QQNN. ANK repeat units lie at residues 519–561 and 565–594; these read NGFT…DPDS and DNNT…HMDA. At Ser608 the chain carries Phosphoserine.

Belongs to the fem-1 family. As to quaternary structure, component of a CRL2 E3 ubiquitin-protein ligase complex, also named ECS (Elongin BC-CUL2/5-SOCS-box protein) complex, composed of CUL2, Elongin BC (ELOB and ELOC), RBX1 and substrate-specific adapter FEM1A. Interacts with PTGER4. Interacts with NFKB1; the interaction is direct. In terms of processing, phosphorylated; highly phosphorylated in myoblasts and myotubes. Phosphorylation at Ser-108 and Ser-608 promote PGE2-EP4-mediated inhibition of inflammation. Dephosphorylated by protein phosphatase 2A (PP2A).

It is found in the mitochondrion. Its subcellular location is the cytoplasm. It functions in the pathway protein modification; protein ubiquitination. Substrate-recognition component of a Cul2-RING (CRL2) E3 ubiquitin-protein ligase complex of the DesCEND (destruction via C-end degrons) pathway, which recognizes a C-degron located at the extreme C terminus of target proteins, leading to their ubiquitination and degradation. The C-degron recognized by the DesCEND pathway is usually a motif of less than ten residues and can be present in full-length proteins, truncated proteins or proteolytically cleaved forms. The CRL2(FEM1A) complex specifically recognizes proteins with an arginine at the C-terminus: recognizes and binds proteins ending with -Lys/Arg-Xaa-Arg and -Lys/Arg-Xaa-Xaa-Arg C-degrons, such as SIL1 or OR51B2, leading to their ubiquitination and degradation. Involved in PGE2-EP4-mediated inhibition of inflammation of macrophages via interaction with NFKB1 and PTGER4. Promotes inflammation in brain microglia through MAP2K4/MKK4-mediated signaling. The protein is Protein fem-1 homolog A of Rattus norvegicus (Rat).